The sequence spans 86 residues: Large ribosomal subunit protein bL31B (86 aa).

It belongs to the bacterial ribosomal protein bL31 family. Type B subfamily. In terms of assembly, part of the 50S ribosomal subunit.

The sequence is that of Large ribosomal subunit protein bL31B from Streptococcus agalactiae serotype Ia (strain ATCC 27591 / A909 / CDC SS700).